The primary structure comprises 820 residues: MAEAAAERDAREKLSLWDGRPDSMAPLTDRQTDSVLELKAAVENLPVPAELPIEDVCSLASQSLPIELTAVVPDSTEDILLKGFTSLGMEEERIETAQQFFSWFAKLQTQMDQDEGTKYRQMRDYLSGFQEQCDAILNDVNSALQHLESLQKQYLFVSNKTGTLHEACEQLLKEQSELADLAEHIQQKLSYFNELETINTKLNSPTLSVNSEGFIPMLAKLDDCITYISSHPNFKDYPVYLLKFKQCLSKALHLMKTYTVNTLQTLTNQLLKRDPSSVPNADNAFTLFYVKFRAAAPKVRTLIEQIEQRSEKIPEYQHLLNDIHQCYLDQRELLLGPSIAYTVTELTSQNNRDHCALVRSGCAFMVHVCQDEHQLYNEFFTKPTSKLDELLEKLCVSLYDVFRPLIIHVIHLETLSELCGILKNEVLEDHVQHNAEQLGAFAAGVKQMLEDVQERLVYRTHIYIQTDITGYKPAPGDLAYPDKLVMMEQIAQSLKDEQKKAPSEASFSDVRLEEGEASGLRKSGSTDSLNPRPQTTISPADLHGMWYPTVRRTLVCLSKLYRCIDRAVFQGLSQEALSACIQSLLGASESISKNKTQIDGQLFLIKHLLILREQIAPFHTEFTIKEISLDLKKTRDAAFKILNPMTVPRFFRLNSNNALIEFLLEGTPEIREHYLDSKKDVDRHLKSACEQFIQQQTRLFGEQLEEFMTKVSALKTMASQGGPKYTLSQQPWAQPAKVNDLVATAYKTIKTKLPLTLRSMALYLSNKDTEFILFKPVRNNIQQVFQKFHALLKEEFSSEDIQIIACPSMEQLNLLLSVSK.

The segment covering 1–21 has biased composition (basic and acidic residues); sequence MAEAAAERDAREKLSLWDGRP. Disordered stretches follow at residues 1–26 and 496–535; these read MAEAAAERDAREKLSLWDGRPDSMAP and DEQKKAPSEASFSDVRLEEGEASGLRKSGSTDSLNPRPQT. Polar residues predominate over residues 523 to 535; that stretch reads SGSTDSLNPRPQT. Ser655 is modified (phosphoserine).

Belongs to the COG3 family. Component of the conserved oligomeric Golgi complex which is composed of eight different subunits and is required for normal Golgi morphology and localization. Interacts with TMEM115.

It localises to the golgi apparatus. Its subcellular location is the golgi stack membrane. Functionally, involved in ER-Golgi transport. Also involved in retrograde (Golgi to ER) transport. The sequence is that of Conserved oligomeric Golgi complex subunit 3 (Cog3) from Mus musculus (Mouse).